The sequence spans 287 residues: Shikimate dehydrogenase (NADP(+)) (287 aa).

Shikimate contacts are provided by residues 20-22 (SRS) and T67. K71 (proton acceptor) is an active-site residue. E84 provides a ligand contact to NADP(+). Residues N93 and D108 each coordinate shikimate. NADP(+) contacts are provided by residues 132–136 (GAGGA) and M226. Y228 contacts shikimate. Position 250 (G250) interacts with NADP(+).

The protein belongs to the shikimate dehydrogenase family. In terms of assembly, homodimer.

The enzyme catalyses shikimate + NADP(+) = 3-dehydroshikimate + NADPH + H(+). It functions in the pathway metabolic intermediate biosynthesis; chorismate biosynthesis; chorismate from D-erythrose 4-phosphate and phosphoenolpyruvate: step 4/7. Functionally, involved in the biosynthesis of the chorismate, which leads to the biosynthesis of aromatic amino acids. Catalyzes the reversible NADPH linked reduction of 3-dehydroshikimate (DHSA) to yield shikimate (SA). In Bordetella petrii (strain ATCC BAA-461 / DSM 12804 / CCUG 43448), this protein is Shikimate dehydrogenase (NADP(+)).